We begin with the raw amino-acid sequence, 340 residues long: GTP 3',8-cyclase (340 aa).

Residues 8-229 (KLGRPIRDLR…IEQHFEISPV (222 aa)) form the Radical SAM core domain. Arginine 17 lines the GTP pocket. [4Fe-4S] cluster contacts are provided by cysteine 24 and cysteine 28. Tyrosine 30 lines the S-adenosyl-L-methionine pocket. Position 31 (cysteine 31) interacts with [4Fe-4S] cluster. Residue arginine 71 participates in GTP binding. Residue glycine 75 coordinates S-adenosyl-L-methionine. Threonine 102 is a binding site for GTP. S-adenosyl-L-methionine is bound at residue serine 126. Lysine 163 is a GTP binding site. Methionine 197 is a binding site for S-adenosyl-L-methionine. 2 residues coordinate [4Fe-4S] cluster: cysteine 261 and cysteine 264. Residue 266-268 (RAR) coordinates GTP. A [4Fe-4S] cluster-binding site is contributed by cysteine 278.

The protein belongs to the radical SAM superfamily. MoaA family. As to quaternary structure, monomer and homodimer. The cofactor is [4Fe-4S] cluster.

It carries out the reaction GTP + AH2 + S-adenosyl-L-methionine = (8S)-3',8-cyclo-7,8-dihydroguanosine 5'-triphosphate + 5'-deoxyadenosine + L-methionine + A + H(+). It functions in the pathway cofactor biosynthesis; molybdopterin biosynthesis. Functionally, catalyzes the cyclization of GTP to (8S)-3',8-cyclo-7,8-dihydroguanosine 5'-triphosphate. In Staphylococcus epidermidis (strain ATCC 35984 / DSM 28319 / BCRC 17069 / CCUG 31568 / BM 3577 / RP62A), this protein is GTP 3',8-cyclase.